The following is a 396-amino-acid chain: Arginine biosynthesis bifunctional protein ArgJ (396 aa).

Positions 147, 173, 184, 270, 391, and 396 each coordinate substrate. T184 functions as the Nucleophile in the catalytic mechanism.

This sequence belongs to the ArgJ family. Heterotetramer of two alpha and two beta chains.

The protein resides in the cytoplasm. It catalyses the reaction N(2)-acetyl-L-ornithine + L-glutamate = N-acetyl-L-glutamate + L-ornithine. The catalysed reaction is L-glutamate + acetyl-CoA = N-acetyl-L-glutamate + CoA + H(+). It participates in amino-acid biosynthesis; L-arginine biosynthesis; L-ornithine and N-acetyl-L-glutamate from L-glutamate and N(2)-acetyl-L-ornithine (cyclic): step 1/1. It functions in the pathway amino-acid biosynthesis; L-arginine biosynthesis; N(2)-acetyl-L-ornithine from L-glutamate: step 1/4. In terms of biological role, catalyzes two activities which are involved in the cyclic version of arginine biosynthesis: the synthesis of N-acetylglutamate from glutamate and acetyl-CoA as the acetyl donor, and of ornithine by transacetylation between N(2)-acetylornithine and glutamate. The sequence is that of Arginine biosynthesis bifunctional protein ArgJ from Lactococcus lactis subsp. lactis (strain IL1403) (Streptococcus lactis).